The chain runs to 63 residues: Conotoxin Tx-D0111 (63 aa).

The N-terminal stretch at 1 to 19 (MRCLPVFVILLLLIASTPS) is a signal peptide. Residues 20-47 (DTVPLKTKDDMPQASFHGNARRTLQMLS) constitute a propeptide that is removed on maturation.

The protein belongs to the conotoxin T superfamily. Post-translationally, contains 2 disulfide bonds that can be either 'C1-C3, C2-C4' or 'C1-C4, C2-C3', since these disulfide connectivities have been observed for conotoxins with cysteine framework V (for examples, see AC P0DQQ7 and AC P81755). As to expression, expressed by the venom duct.

The protein resides in the secreted. The sequence is that of Conotoxin Tx-D0111 from Conus textile (Cloth-of-gold cone).